The chain runs to 172 residues: NADH-ubiquinone oxidoreductase chain 6 (172 aa).

5 consecutive transmembrane segments (helical) span residues 1-21, 27-47, 48-68, 87-107, and 138-158; these read MTYFVLFLGLCFVLGGLAVAS, YGVVGLVLASVAGCAWLLSLG, VSFVSLVLFMVYLGGMLVVFV, VVGYGMGFVAVLVMGMVVGGF, and CGVGMFLVAGWGLLLTLFVVL.

The protein belongs to the complex I subunit 6 family.

The protein resides in the mitochondrion membrane. It catalyses the reaction a ubiquinone + NADH + 5 H(+)(in) = a ubiquinol + NAD(+) + 4 H(+)(out). Functionally, core subunit of the mitochondrial membrane respiratory chain NADH dehydrogenase (Complex I) that is believed to belong to the minimal assembly required for catalysis. Complex I functions in the transfer of electrons from NADH to the respiratory chain. The immediate electron acceptor for the enzyme is believed to be ubiquinone. In Uria lomvia (Thick-billed murre), this protein is NADH-ubiquinone oxidoreductase chain 6 (MT-ND6).